The sequence spans 205 residues: Cerebellin-3 (205 aa).

The N-terminal stretch at 1–32 is a signal peptide; it reads MLGTKRHWPPGPSLSLELPLALTLLALRAGWA. The C1q domain occupies 67-205; that stretch reads APPGRVAFAA…SFSGFLIFPL (139 aa). N-linked (GlcNAc...) asparagine glycosylation occurs at Asn-90.

In terms of assembly, heterohexamer; disulfide-linked heterotrimers. Interacts with CBLN1. May also form oligomers with CBLN2 and CBLN4.

The protein resides in the endoplasmic reticulum. The protein localises to the golgi apparatus. Its subcellular location is the cis-Golgi network. It is found in the secreted. It localises to the synapse. Its function is as follows. May be involved in synaptic functions in the CNS. The polypeptide is Cerebellin-3 (CBLN3) (Bos taurus (Bovine)).